A 109-amino-acid polypeptide reads, in one-letter code: Phosphoribosyl-AMP cyclohydrolase (109 aa).

Mg(2+) is bound at residue aspartate 76. Position 77 (cysteine 77) interacts with Zn(2+). The Mg(2+) site is built by aspartate 78 and aspartate 80. 2 residues coordinate Zn(2+): cysteine 93 and cysteine 100.

It belongs to the PRA-CH family. As to quaternary structure, homodimer. It depends on Mg(2+) as a cofactor. Zn(2+) serves as cofactor.

The protein resides in the cytoplasm. It catalyses the reaction 1-(5-phospho-beta-D-ribosyl)-5'-AMP + H2O = 1-(5-phospho-beta-D-ribosyl)-5-[(5-phospho-beta-D-ribosylamino)methylideneamino]imidazole-4-carboxamide. It participates in amino-acid biosynthesis; L-histidine biosynthesis; L-histidine from 5-phospho-alpha-D-ribose 1-diphosphate: step 3/9. In terms of biological role, catalyzes the hydrolysis of the adenine ring of phosphoribosyl-AMP. The polypeptide is Phosphoribosyl-AMP cyclohydrolase (Streptococcus mutans serotype c (strain ATCC 700610 / UA159)).